The following is a 258-amino-acid chain: MLIVVSPAKTLDYESELPALKTTQPRLLDDSEALIARARQLSPADISSLMGVSDKIAHLNAERFSLWERPFNKKNARPAAFAFKGDVYTGLDIESFNDHQLSEAQQRFRMLSGLYGVLRPLDLMQAYRLEMGTKLDNERGKDLYAFWGNTITELLNKDMKDAKTDVLVNLASNEYFKAVKKKAVAGTIIEPVFQDEKNGNYKIISFYAKKARGLMAAWIIKKGLKDPAKLTQFDVAGYCYCEAQSTALRPVFRRPEQG.

This sequence belongs to the UPF0246 family.

This is UPF0246 protein ABO_1338 from Alcanivorax borkumensis (strain ATCC 700651 / DSM 11573 / NCIMB 13689 / SK2).